A 200-amino-acid chain; its full sequence is MIGQLTGLVGQIEGERCIVDVNGVGYVVSASTRTLAVLPQPPSVARVLIETIVREDAIQLFGFATTDERDWFRLLTTVQSVGAKVALAILSANNPGELLLAINAGDKGSLTRAAGVGPRLADRILSELRNKVAKMPGGGGTVSAPGIVSGPSVENDALLALAGLGFRRAEAWPVLSKVLAENENATLDLAIRLSLKDLAR.

The segment at Met-1–Ala-64 is domain I. A domain II region spans residues Thr-65–Ser-143. The flexible linker stretch occupies residues Ala-144–Val-148. The interval Ser-149 to Arg-200 is domain III.

This sequence belongs to the RuvA family. In terms of assembly, homotetramer. Forms an RuvA(8)-RuvB(12)-Holliday junction (HJ) complex. HJ DNA is sandwiched between 2 RuvA tetramers; dsDNA enters through RuvA and exits via RuvB. An RuvB hexamer assembles on each DNA strand where it exits the tetramer. Each RuvB hexamer is contacted by two RuvA subunits (via domain III) on 2 adjacent RuvB subunits; this complex drives branch migration. In the full resolvosome a probable DNA-RuvA(4)-RuvB(12)-RuvC(2) complex forms which resolves the HJ.

It localises to the cytoplasm. Functionally, the RuvA-RuvB-RuvC complex processes Holliday junction (HJ) DNA during genetic recombination and DNA repair, while the RuvA-RuvB complex plays an important role in the rescue of blocked DNA replication forks via replication fork reversal (RFR). RuvA specifically binds to HJ cruciform DNA, conferring on it an open structure. The RuvB hexamer acts as an ATP-dependent pump, pulling dsDNA into and through the RuvAB complex. HJ branch migration allows RuvC to scan DNA until it finds its consensus sequence, where it cleaves and resolves the cruciform DNA. The polypeptide is Holliday junction branch migration complex subunit RuvA (Gluconobacter oxydans (strain 621H) (Gluconobacter suboxydans)).